The sequence spans 181 residues: Oleosin (181 aa).

The tract at residues 1–28 (TTTTYDRHFTTTQPHYRQDDRSRYDQQT) is disordered. Residues 1–38 (TTTTYDRHFTTTQPHYRQDDRSRYDQQTHSQSTSRTLA) are polar. Over residues 16–26 (YRQDDRSRYDQ) the composition is skewed to basic and acidic residues. 3 helical membrane passes run 38-58 (AIIA…LTFI), 69-89 (PLFV…GLAV), and 90-110 (TGFL…SYLF). Residues 39-110 (IIALLPVGGI…TGLSSLSYLF (72 aa)) are hydrophobic. Residues 155-181 (EMGDQGQVGVHAQVGGGKEGRKSGDRT) form a disordered region. The segment covering 158 to 167 (DQGQVGVHAQ) has biased composition (low complexity). Residues 172 to 181 (KEGRKSGDRT) are compositionally biased toward basic and acidic residues.

Belongs to the oleosin family.

It localises to the lipid droplet. It is found in the membrane. Its function is as follows. May have a structural role to stabilize the lipid body during desiccation of the seed by preventing coalescence of the oil. Probably interacts with both lipid and phospholipid moieties of lipid bodies. May also provide recognition signals for specific lipase anchorage in lipolysis during seedling growth. The polypeptide is Oleosin (Helianthus annuus (Common sunflower)).